The sequence spans 160 residues: Cytochrome b6-f complex subunit 4 (160 aa).

The next 3 helical transmembrane spans lie at Leu-36 to Val-56, Leu-95 to Glu-115, and Thr-131 to Ile-151.

Belongs to the cytochrome b family. PetD subfamily. The 4 large subunits of the cytochrome b6-f complex are cytochrome b6, subunit IV (17 kDa polypeptide, petD), cytochrome f and the Rieske protein, while the 4 small subunits are petG, petL, petM and petN. The complex functions as a dimer.

It localises to the plastid. The protein resides in the chloroplast thylakoid membrane. Component of the cytochrome b6-f complex, which mediates electron transfer between photosystem II (PSII) and photosystem I (PSI), cyclic electron flow around PSI, and state transitions. In Psilotum nudum (Whisk fern), this protein is Cytochrome b6-f complex subunit 4.